The sequence spans 275 residues: 2,3,4,5-tetrahydropyridine-2,6-dicarboxylate N-succinyltransferase (275 aa).

Substrate is bound by residues arginine 108 and aspartate 145.

Belongs to the transferase hexapeptide repeat family. As to quaternary structure, homotrimer.

The protein localises to the cytoplasm. The enzyme catalyses (S)-2,3,4,5-tetrahydrodipicolinate + succinyl-CoA + H2O = (S)-2-succinylamino-6-oxoheptanedioate + CoA. It functions in the pathway amino-acid biosynthesis; L-lysine biosynthesis via DAP pathway; LL-2,6-diaminopimelate from (S)-tetrahydrodipicolinate (succinylase route): step 1/3. This is 2,3,4,5-tetrahydropyridine-2,6-dicarboxylate N-succinyltransferase from Maricaulis maris (strain MCS10) (Caulobacter maris).